A 227-amino-acid chain; its full sequence is 2-C-methyl-D-erythritol 4-phosphate cytidylyltransferase (227 aa).

The protein belongs to the IspD/TarI cytidylyltransferase family. IspD subfamily.

It catalyses the reaction 2-C-methyl-D-erythritol 4-phosphate + CTP + H(+) = 4-CDP-2-C-methyl-D-erythritol + diphosphate. It functions in the pathway isoprenoid biosynthesis; isopentenyl diphosphate biosynthesis via DXP pathway; isopentenyl diphosphate from 1-deoxy-D-xylulose 5-phosphate: step 2/6. Catalyzes the formation of 4-diphosphocytidyl-2-C-methyl-D-erythritol from CTP and 2-C-methyl-D-erythritol 4-phosphate (MEP). In Deinococcus geothermalis (strain DSM 11300 / CIP 105573 / AG-3a), this protein is 2-C-methyl-D-erythritol 4-phosphate cytidylyltransferase.